A 134-amino-acid polypeptide reads, in one-letter code: MSWQAYVDDHLMCDIEGHEGHRLTAAAIIGHDGSVWAQSATFPQFKPEEMNGIMTDFNEPGHLAPTGLHLGGTKYMVIQGEAGAVIRGKKGSGGITIKKTGQALVCGIYEEPVTPGQCNMVVERLGDYLLEQGL.

Cysteine 13 and cysteine 118 are joined by a disulfide. Residues 84 to 100 (AVIRGKKGSGGITIKKT) carry the Involved in PIP2 interaction motif. Threonine 114 bears the Phosphothreonine mark.

It belongs to the profilin family. Occurs in many kinds of cells as a complex with monomeric actin in a 1:1 ratio. Phosphorylated by MAP kinases.

Its subcellular location is the cytoplasm. It localises to the cytoskeleton. Its function is as follows. Binds to actin and affects the structure of the cytoskeleton. At high concentrations, profilin prevents the polymerization of actin, whereas it enhances it at low concentrations. This is Profilin-2 from Olea europaea (Common olive).